Reading from the N-terminus, the 1940-residue chain is Myosin-13 (1940 aa).

One can recognise a Myosin N-terminal SH3-like domain in the interval 33–82 (DSKKACFAMDDKEMYVKGMIQSRENDKVTVKTLDDRTLTLNSDQVFPMNP). The Myosin motor domain occupies 86 to 782 (DKIEDMAMMT…LLGLLEEMRD (697 aa)). Lys-130 carries the post-translational modification N6,N6,N6-trimethyllysine. ATP is bound at residue 179–186 (GESGAGKT). 2 actin-binding regions span residues 659–681 (LNKL…IPNE) and 761–775 (RFGH…GLLG). Positions 785–814 (LVTLMTRTQAICRGYLMRVEFKKMMERRES) constitute an IQ domain. Positions 843-1940 (LLKSAEAERE…RDVGAQKMEE (1098 aa)) form a coiled coil. Residues 1886 to 1940 (RQAEEAEEQANTQMSKCRRVQHELEEAEERADIAESQVNKLRAKSRDVGAQKMEE) are disordered. The segment covering 1929–1940 (KSRDVGAQKMEE) has biased composition (basic and acidic residues).

This sequence belongs to the TRAFAC class myosin-kinesin ATPase superfamily. Myosin family. As to quaternary structure, muscle myosin is a hexameric protein that consists of 2 heavy chain subunits (MHC), 2 alkali light chain subunits (MLC) and 2 regulatory light chain subunits (MLC-2).

It is found in the cytoplasm. Its subcellular location is the myofibril. Functionally, fast twitching myosin mediating the high-velocity and low-tension contractions of specific striated muscles. The chain is Myosin-13 (MYH13) from Canis lupus familiaris (Dog).